The sequence spans 258 residues: Aquaglyceroporin (258 aa).

The Cytoplasmic segment spans residues 1–11 (MHMLFYKSYVR). Residues 12 to 32 (EFIGEFLGTFVLMFLGEGATA) form a helical membrane-spanning segment. The Extracellular segment spans residues 33-45 (NFHTTGLSGDWYK). The chain crosses the membrane as a helical span at residues 46-66 (LCLGWGLAVFFGILVSAKLSG). Residues Gly-66, Ala-67, and Asn-70 each contribute to the glycerol site. Over 67–87 (AHLNLAVSIGLSSINKFDLKK) the chain is Cytoplasmic. Residues 88–108 (IPVYFFAQLLGAFVGTSTVYG) form a helical membrane-spanning segment. Topologically, residues 109-135 (LYHGFISNSKIPQFAWETSRNPSISLT) are extracellular. Glycerol is bound at residue Ser-127. Residues 136 to 156 (GAFFNELILTGILLLVILVVV) traverse the membrane as a helical segment. At 157–171 (DENICGKFHILKLSS) the chain is on the cytoplasmic side. Residues 172 to 192 (VVGLIILCIGITFGGNTGFAL) form a helical membrane-spanning segment. Positions 189, 190, 193, and 196 each coordinate glycerol. Over 193–217 (NPSRDLGSRFLSLIAYGKDTFTKDN) the chain is Extracellular. The chain crosses the membrane as a helical span at residues 218–238 (FYFWVPLVAPCVGSVVFCQFY). Residues 239–258 (DKVICPLVDLANNEKDGVDL) lie on the Cytoplasmic side of the membrane.

Belongs to the MIP/aquaporin (TC 1.A.8) family. Homotetramer.

The protein resides in the cell membrane. The catalysed reaction is H2O(in) = H2O(out). The enzyme catalyses glycerol(in) = glycerol(out). It carries out the reaction urea(in) = urea(out). It catalyses the reaction NH4(+)(in) = NH4(+)(out). The catalysed reaction is methylamine(out) = methylamine(in). The enzyme catalyses formamide(out) = formamide(in). In terms of biological role, mediates water and glycerol transport across the cell membrane. Permeable to sugar alcohols of up to five carbons and urea. Permeable to ammonia, methylamine and formamide. In Plasmodium falciparum (isolate 3D7), this protein is Aquaglyceroporin.